The following is a 309-amino-acid chain: Ribonuclease Z (309 aa).

Zn(2+)-binding residues include histidine 63, histidine 65, aspartate 67, histidine 68, histidine 141, aspartate 212, and histidine 270. Residue aspartate 67 is the Proton acceptor of the active site.

This sequence belongs to the RNase Z family. As to quaternary structure, homodimer. Zn(2+) is required as a cofactor.

It catalyses the reaction Endonucleolytic cleavage of RNA, removing extra 3' nucleotides from tRNA precursor, generating 3' termini of tRNAs. A 3'-hydroxy group is left at the tRNA terminus and a 5'-phosphoryl group is left at the trailer molecule.. Its function is as follows. Zinc phosphodiesterase, which displays some tRNA 3'-processing endonuclease activity. Probably involved in tRNA maturation, by removing a 3'-trailer from precursor tRNA. In Lactobacillus gasseri (strain ATCC 33323 / DSM 20243 / BCRC 14619 / CIP 102991 / JCM 1131 / KCTC 3163 / NCIMB 11718 / NCTC 13722 / AM63), this protein is Ribonuclease Z.